A 128-amino-acid polypeptide reads, in one-letter code: Small ribosomal subunit protein uS11 (128 aa).

This sequence belongs to the universal ribosomal protein uS11 family. In terms of assembly, part of the 30S ribosomal subunit. Interacts with proteins S7 and S18. Binds to IF-3.

Located on the platform of the 30S subunit, it bridges several disparate RNA helices of the 16S rRNA. Forms part of the Shine-Dalgarno cleft in the 70S ribosome. The chain is Small ribosomal subunit protein uS11 from Methylococcus capsulatus (strain ATCC 33009 / NCIMB 11132 / Bath).